A 358-amino-acid polypeptide reads, in one-letter code: Peptide chain release factor 1 (358 aa).

Residue Q235 is modified to N5-methylglutamine.

This sequence belongs to the prokaryotic/mitochondrial release factor family. In terms of processing, methylated by PrmC. Methylation increases the termination efficiency of RF1.

Its subcellular location is the cytoplasm. Its function is as follows. Peptide chain release factor 1 directs the termination of translation in response to the peptide chain termination codons UAG and UAA. In Neisseria gonorrhoeae (strain NCCP11945), this protein is Peptide chain release factor 1.